A 293-amino-acid polypeptide reads, in one-letter code: Forkhead box protein N5 (293 aa).

Residues 104–152 are disordered; sequence TSPPLQLQRQLSNDYSTVEDSEDEAPTSCSDVLTDDDDSYNPWQPKHKR. The span at 106-119 shows a compositional bias: polar residues; it reads PPLQLQRQLSNDYS. The fork-head DNA-binding region spans 176-273; it reads RPPLNYCNLI…NEMHALSDDL (98 aa).

It is found in the nucleus. This is Forkhead box protein N5 from Xenopus tropicalis (Western clawed frog).